A 161-amino-acid polypeptide reads, in one-letter code: Protein PLANT CADMIUM RESISTANCE 12 (161 aa).

Residues 71–89 (AGLIHLALGFIGCSWLYAF) form a helical membrane-spanning segment.

The protein belongs to the cornifelin family.

The protein localises to the membrane. Functionally, may be involved in heavy metals transport. In Arabidopsis thaliana (Mouse-ear cress), this protein is Protein PLANT CADMIUM RESISTANCE 12 (PCR12).